A 347-amino-acid polypeptide reads, in one-letter code: MSLVSVHNEWDPLEEVIVGTAVGARVPTADRSVFAVEYAGDYESQEQIPSGAYPDRVLKETEEELHVLAAELTKLGVTVRRPGPRDHSALIKTPDWETDGFHDYCPRDGLLSVGQTIIETPMALRSRFLESLAYKDLLLEYFASGSRWLSAPKPRLTDDSYAPQAPAGERLTDEEPVFDAANVLRFGTDLLYLVSDSGNELGAKWLQSAVGDTYTVHPCRKLYASTHVDSTIVPLRPGLVLTNPSRVNDENMPDFLRSWENITCPELVDIGFTGDKPHCSVWIGMNLLVVRPDLAVVDRRQTALIRLLEKHGMNVLPLQLTHSRTLGGGFHCATLDVRRTARETYQF.

Catalysis depends on residues aspartate 179 and histidine 227. The active-site Amidino-cysteine intermediate is the cysteine 332.

This sequence belongs to the amidinotransferase family. As to quaternary structure, homodimer.

The enzyme catalyses 1-amino-1-deoxy-scyllo-inositol 4-phosphate + L-arginine = 1-guanidino-1-deoxy-scyllo-inositol 4-phosphate + L-ornithine. It participates in antibiotic biosynthesis; streptomycin biosynthesis. Its function is as follows. Catalyzes two non-consecutive transamidination reactions. It converts scyllo-inosamine 4-phosphate into N-amidino-scyllo-inosamine 4-phosphate and N1-amidinostreptamine 6-phosphate into streptidine 6-phosphate. In Streptomyces griseus, this protein is Inosamine-phosphate amidinotransferase 1 (strB1).